The primary structure comprises 323 residues: tRNA dimethylallyltransferase (323 aa).

Residue 12-19 coordinates ATP; the sequence is GPTASGKT. A substrate-binding site is contributed by 14–19; the sequence is TASGKT. Interaction with substrate tRNA stretches follow at residues 37–40 and 161–165; these read DSAL and QRLVR.

It belongs to the IPP transferase family. Monomer. Mg(2+) is required as a cofactor.

It carries out the reaction adenosine(37) in tRNA + dimethylallyl diphosphate = N(6)-dimethylallyladenosine(37) in tRNA + diphosphate. In terms of biological role, catalyzes the transfer of a dimethylallyl group onto the adenine at position 37 in tRNAs that read codons beginning with uridine, leading to the formation of N6-(dimethylallyl)adenosine (i(6)A). The sequence is that of tRNA dimethylallyltransferase from Azotobacter vinelandii (strain DJ / ATCC BAA-1303).